Consider the following 463-residue polypeptide: UDP-N-acetylmuramate--L-alanine ligase (463 aa).

Residue 112–118 (GTHGKTT) participates in ATP binding.

Belongs to the MurCDEF family.

Its subcellular location is the cytoplasm. It carries out the reaction UDP-N-acetyl-alpha-D-muramate + L-alanine + ATP = UDP-N-acetyl-alpha-D-muramoyl-L-alanine + ADP + phosphate + H(+). Its pathway is cell wall biogenesis; peptidoglycan biosynthesis. Cell wall formation. The chain is UDP-N-acetylmuramate--L-alanine ligase from Dechloromonas aromatica (strain RCB).